The chain runs to 377 residues: tRNA N6-adenosine threonylcarbamoyltransferase (377 aa).

H129 and H133 together coordinate Fe cation. Substrate contacts are provided by residues 151 to 155 (LVSGG), D184, G197, and N298. D326 contacts Fe cation. The interval 358–377 (DGAAAKSDPAIGSGRKGPKA) is disordered.

This sequence belongs to the KAE1 / TsaD family. Fe(2+) serves as cofactor.

It localises to the cytoplasm. It carries out the reaction L-threonylcarbamoyladenylate + adenosine(37) in tRNA = N(6)-L-threonylcarbamoyladenosine(37) in tRNA + AMP + H(+). In terms of biological role, required for the formation of a threonylcarbamoyl group on adenosine at position 37 (t(6)A37) in tRNAs that read codons beginning with adenine. Is involved in the transfer of the threonylcarbamoyl moiety of threonylcarbamoyl-AMP (TC-AMP) to the N6 group of A37, together with TsaE and TsaB. TsaD likely plays a direct catalytic role in this reaction. The protein is tRNA N6-adenosine threonylcarbamoyltransferase of Maricaulis maris (strain MCS10) (Caulobacter maris).